Reading from the N-terminus, the 290-residue chain is 4-hydroxybenzoate octaprenyltransferase (290 aa).

8 helical membrane-spanning segments follow: residues 40 to 60 (IAGAGTPSLTVIVVFFLGVVI), 99 to 119 (LALFGGLGLLAFGLVLFLNEL), 120 to 140 (TFWLSFGGLGLAVLYPFTKRF), 142 to 162 (FMPQLFLGAAFSWAIPMAFAA), 165 to 185 (GEVPEIAWLLYVANVLWTVAY), 215 to 235 (LMIAILQALTLLALIMVGHRL), 239 to 259 (WPWYAGLVGMSLSFAFQHSLI), and 267 to 287 (SFHAFLNNHWAGACVFIGLYF).

This sequence belongs to the UbiA prenyltransferase family. Requires Mg(2+) as cofactor.

The protein localises to the cell inner membrane. The catalysed reaction is all-trans-octaprenyl diphosphate + 4-hydroxybenzoate = 4-hydroxy-3-(all-trans-octaprenyl)benzoate + diphosphate. It functions in the pathway cofactor biosynthesis; ubiquinone biosynthesis. Catalyzes the prenylation of para-hydroxybenzoate (PHB) with an all-trans polyprenyl group. Mediates the second step in the final reaction sequence of ubiquinone-8 (UQ-8) biosynthesis, which is the condensation of the polyisoprenoid side chain with PHB, generating the first membrane-bound Q intermediate 3-octaprenyl-4-hydroxybenzoate. In Alcanivorax borkumensis (strain ATCC 700651 / DSM 11573 / NCIMB 13689 / SK2), this protein is 4-hydroxybenzoate octaprenyltransferase.